We begin with the raw amino-acid sequence, 124 residues long: Small ribosomal subunit protein bS6 (124 aa).

A disordered region spans residues Ile-101–Ala-124. Over residues Glu-105–Ala-115 the composition is skewed to basic and acidic residues.

The protein belongs to the bacterial ribosomal protein bS6 family.

Functionally, binds together with bS18 to 16S ribosomal RNA. This is Small ribosomal subunit protein bS6 from Polynucleobacter asymbioticus (strain DSM 18221 / CIP 109841 / QLW-P1DMWA-1) (Polynucleobacter necessarius subsp. asymbioticus).